The sequence spans 949 residues: Isoleucine--tRNA ligase (949 aa).

A 'HIGH' region motif is present at residues 58–68 (PYANGDIHIGH). Glu-567 contacts L-isoleucyl-5'-AMP. Residues 608-612 (KMSKS) carry the 'KMSKS' region motif. Residue Lys-611 participates in ATP binding. Zn(2+) contacts are provided by Cys-912, Cys-915, Cys-932, and Cys-935.

This sequence belongs to the class-I aminoacyl-tRNA synthetase family. IleS type 1 subfamily. As to quaternary structure, monomer. Zn(2+) is required as a cofactor.

The protein resides in the cytoplasm. The catalysed reaction is tRNA(Ile) + L-isoleucine + ATP = L-isoleucyl-tRNA(Ile) + AMP + diphosphate. Catalyzes the attachment of isoleucine to tRNA(Ile). As IleRS can inadvertently accommodate and process structurally similar amino acids such as valine, to avoid such errors it has two additional distinct tRNA(Ile)-dependent editing activities. One activity is designated as 'pretransfer' editing and involves the hydrolysis of activated Val-AMP. The other activity is designated 'posttransfer' editing and involves deacylation of mischarged Val-tRNA(Ile). The polypeptide is Isoleucine--tRNA ligase (Vibrio cholerae serotype O1 (strain ATCC 39541 / Classical Ogawa 395 / O395)).